Here is a 710-residue protein sequence, read N- to C-terminus: Early transcription factor 82 kDa subunit (710 aa).

The protein belongs to the poxviridae VETF large subunit family. As to quaternary structure, heterodimer of a 70 kDa and a 82 kDa subunit. Part of the early transcription complex composed of ETF, RAP94/OPG109, and the DNA-directed RNA polymerase.

Its subcellular location is the virion. Its function is as follows. Acts with RNA polymerase to initiate transcription from early gene promoters. Is recruited by the RPO-associated protein of 94 kDa RAP94/OPG109 to form the early transcription complex, which also contains the core RNA polymerase. ETF heterodimer binds to early gene promoters. The sequence is that of Early transcription factor 82 kDa subunit (OPG133) from Homo sapiens (Human).